A 488-amino-acid polypeptide reads, in one-letter code: MPAEILSELPLRPAPRDIKIPNAMHNEERRHKHSRSSYSEMSPLMSRNNSLTWRPAKRPMPTPDKTIAVINAAGRQAASFIRVATAVGFHVRAQMRNLEGVVATEVSTNPNVTVLQGELYTKETPAESDKGQCVDVTKNGPISGIGVNDALISELFRGAQLAFINTTFYGDEERIGMALADAAKKAGVQHYVYSSMPDHHAYNKDWPSLPLWASKHRVEDYVKEIGIPATFVYTGIYNNNFTSLPYPLFCTDLQPDGSWIWQAPFHPNAKLPWLDAEHDVGPAILQIFKDGVKKWGGGKRIALAYEMLTPLEACEVFSRGVGRPVRYVRGPIEVKVKIPEGYRIQLEALEELFNLHNEDPEKQPPYFGDIELERSCPRAALELWEGPRGLEEYAREVFPLEEQANGLTWMIEEYDGGGGNNIGNNHNNHHQQEEHYQHQNGHQNGHNGINGHIVNGGVDSESEEEDSDSDDEGLVMRGNKRADEEWLA.

The segment at 1 to 45 is disordered; that stretch reads MPAEILSELPLRPAPRDIKIPNAMHNEERRHKHSRSSYSEMSPLM. Basic and acidic residues predominate over residues 14–29; the sequence is APRDIKIPNAMHNEER. Over residues 36–45 the composition is skewed to polar residues; the sequence is SSYSEMSPLM. NADP(+) contacts are provided by residues 71-76, Asn-165, Lys-215, and 237-240; these read NAAGRQ and YNNN. NAD(+) contacts are provided by residues 75–76, 165–167, Lys-215, and 237–240; these read RQ, NTT, and YNNN. Residues 412-488 are dispensable for NMR function; that stretch reads EEYDGGGGNN…NKRADEEWLA (77 aa). The tract at residues 422–488 is disordered; sequence IGNNHNNHHQ…NKRADEEWLA (67 aa). Residues 438–459 show a composition bias toward low complexity; sequence HQNGHQNGHNGINGHIVNGGVD. The segment covering 460–473 has biased composition (acidic residues); sequence SESEEEDSDSDDEG.

The protein belongs to the NmrA-type oxidoreductase family. As to quaternary structure, interacts with nit-2.

Its subcellular location is the nucleus. Its function is as follows. May be a redox sensor protein. Negative transcriptional regulator involved in the post-transcriptional modulation of the GATA-type transcription factor nit-2, forming part of a system controlling nitrogen metabolite repression. The protein is Nitrogen metabolite repression protein nmr (nmr) of Neurospora crassa (strain ATCC 24698 / 74-OR23-1A / CBS 708.71 / DSM 1257 / FGSC 987).